The sequence spans 363 residues: 3-isopropylmalate dehydrogenase (363 aa).

Position 78–89 (78–89 (GPKWGTGAVRPE)) interacts with NAD(+). Positions 96, 106, 135, and 224 each coordinate substrate. Asp224, Asp249, and Asp253 together coordinate Mg(2+). 288–299 (GSAPDLPANKVN) serves as a coordination point for NAD(+).

Belongs to the isocitrate and isopropylmalate dehydrogenases family. In terms of assembly, homodimer. Mg(2+) serves as cofactor. It depends on Mn(2+) as a cofactor.

The protein localises to the cytoplasm. The catalysed reaction is (2R,3S)-3-isopropylmalate + NAD(+) = 4-methyl-2-oxopentanoate + CO2 + NADH. The protein operates within amino-acid biosynthesis; L-leucine biosynthesis; L-leucine from 3-methyl-2-oxobutanoate: step 3/4. Its function is as follows. Catalyzes the oxidation of 3-carboxy-2-hydroxy-4-methylpentanoate (3-isopropylmalate) to 3-carboxy-4-methyl-2-oxopentanoate. The product decarboxylates to 4-methyl-2 oxopentanoate. This chain is 3-isopropylmalate dehydrogenase (LEU2), found in Cyberlindnera jadinii (Torula yeast).